The sequence spans 109 residues: Iron-sulfur cluster assembly protein CyaY (109 aa).

The protein belongs to the frataxin family.

In terms of biological role, involved in iron-sulfur (Fe-S) cluster assembly. May act as a regulator of Fe-S biogenesis. This is Iron-sulfur cluster assembly protein CyaY from Bordetella pertussis (strain Tohama I / ATCC BAA-589 / NCTC 13251).